Consider the following 500-residue polypeptide: Squalene epoxidase ERG1 (500 aa).

Residues 20–40 traverse the membrane as a helical segment; it reads EADVVVVGAGVFGCTMAFALA. Residues 30-31, 50-51, Arg-58, Arg-145, Asp-332, and Met-345 contribute to the FAD site; these read VF and ER. 2 helical membrane passes run 450–470 and 474–494; these read AFLA…LGIF and LAII…IPIM.

This sequence belongs to the squalene monooxygenase family. It depends on FAD as a cofactor.

It localises to the microsome membrane. Its subcellular location is the endoplasmic reticulum membrane. The protein localises to the lipid droplet. The catalysed reaction is squalene + reduced [NADPH--hemoprotein reductase] + O2 = (S)-2,3-epoxysqualene + oxidized [NADPH--hemoprotein reductase] + H2O + H(+). It participates in terpene metabolism; lanosterol biosynthesis; lanosterol from farnesyl diphosphate: step 2/3. The protein operates within steroid metabolism; ergosterol biosynthesis. Squalene epoxidase; part of the third module of ergosterol biosynthesis pathway that includes the late steps of the pathway. ERG1 catalyzes the epoxidation of squalene into 2,3-epoxysqualene. The third module or late pathway involves the ergosterol synthesis itself through consecutive reactions that mainly occur in the endoplasmic reticulum (ER) membrane. Firstly, the squalene synthase ERG9 catalyzes the condensation of 2 farnesyl pyrophosphate moieties to form squalene, which is the precursor of all steroids. Squalene synthase is crucial for balancing the incorporation of farnesyl diphosphate (FPP) into sterol and nonsterol isoprene synthesis. Secondly, squalene is converted into lanosterol by the consecutive action of the squalene epoxidase ERG1 and the lanosterol synthase ERG7. Then, the delta(24)-sterol C-methyltransferase ERG6 methylates lanosterol at C-24 to produce eburicol. Eburicol is the substrate of the sterol 14-alpha demethylase encoded by CYP51A, CYP51B and CYP51C, to yield 4,4,24-trimethyl ergosta-8,14,24(28)-trienol. CYP51B encodes the enzyme primarily responsible for sterol 14-alpha-demethylation, and plays an essential role in ascospore formation. CYP51A encodes an additional sterol 14-alpha-demethylase, induced on ergosterol depletion and responsible for the intrinsic variation in azole sensitivity. The third CYP51 isoform, CYP51C, does not encode a sterol 14-alpha-demethylase, but is required for full virulence on host wheat ears. The C-14 reductase ERG24 then reduces the C14=C15 double bond which leads to 4,4-dimethylfecosterol. A sequence of further demethylations at C-4, involving the C-4 demethylation complex containing the C-4 methylsterol oxidases ERG25, the sterol-4-alpha-carboxylate 3-dehydrogenase ERG26 and the 3-keto-steroid reductase ERG27, leads to the production of fecosterol via 4-methylfecosterol. ERG28 has a role as a scaffold to help anchor ERG25, ERG26 and ERG27 to the endoplasmic reticulum. The C-8 sterol isomerase ERG2 then catalyzes the reaction which results in unsaturation at C-7 in the B ring of sterols and thus converts fecosterol to episterol. The sterol-C5-desaturases ERG3A and ERG3BB then catalyze the introduction of a C-5 double bond in the B ring to produce 5-dehydroepisterol. The C-22 sterol desaturases ERG5A and ERG5B further convert 5-dehydroepisterol into ergosta-5,7,22,24(28)-tetraen-3beta-ol by forming the C-22(23) double bond in the sterol side chain. Finally, ergosta-5,7,22,24(28)-tetraen-3beta-ol is substrate of the C-24(28) sterol reductase ERG4 to produce ergosterol. This is Squalene epoxidase ERG1 from Gibberella zeae (strain ATCC MYA-4620 / CBS 123657 / FGSC 9075 / NRRL 31084 / PH-1) (Wheat head blight fungus).